Here is a 1016-residue protein sequence, read N- to C-terminus: Protein kinase C-like 2 (1016 aa).

Residues 1-68 (MDMIDEAITE…LEKLKLRKNG (68 aa)) form the REM-1 1 domain. The tract at residues 68–101 (GVRKSNSEKPSVGIEKNPSFSTTKSAKSFSSTSS) is disordered. The span at 86–101 (SFSTTKSAKSFSSTSS) shows a compositional bias: low complexity. The REM-1 2 domain maps to 111–188 (NYDTPLTISK…LKRYHDLHIE (78 aa)). The 113-residue stretch at 195-307 (PSTESRGNLN…VEKQRRKKVE (113 aa)) folds into the C2 domain. Phorbol-ester/DAG-type zinc fingers lie at residues 405-453 (GHKF…VTKC) and 473-523 (PHHF…PDFC). A disordered region spans residues 543–602 (YKAQQHKQKSSHHKHHHHKKSKSSSSKHKENDKASVSITTTTTPSITPADPVPTSPKPLA). Over residues 546 to 568 (QQHKQKSSHHKHHHHKKSKSSSS) the composition is skewed to basic residues. Low complexity predominate over residues 579-590 (SITTTTTPSITP). One can recognise a Protein kinase domain in the interval 683 to 942 (FTFLSVLGKG…AEDVMTHPFF (260 aa)). Residues 689–697 (LGKGNFGKV) and K712 each bind ATP. D808 functions as the Proton acceptor in the catalytic mechanism. An AGC-kinase C-terminal domain is found at 943 to 1013 (SNINWDDIYH…SCEDDKPSTT (71 aa)). T984 bears the Phosphothreonine mark.

Belongs to the protein kinase superfamily. AGC Ser/Thr protein kinase family. PKC subfamily. In terms of assembly, interacts with rho2.

The enzyme catalyses L-seryl-[protein] + ATP = O-phospho-L-seryl-[protein] + ADP + H(+). It catalyses the reaction L-threonyl-[protein] + ATP = O-phospho-L-threonyl-[protein] + ADP + H(+). Its function is as follows. Involved in the control of the cell shape. Target of the inhibitor staurosporine. This is Protein kinase C-like 2 (pck2) from Schizosaccharomyces pombe (strain 972 / ATCC 24843) (Fission yeast).